The following is a 349-amino-acid chain: MMAKTKGSYEVFHYTVTKDKVNKGLCDIARYFVPEYRNSKDEDLTIQKLNGGITNVLYLVEDKNIEQKYRYLPVVIRLYGYKSEEIIDRKNELIIQTEADQNGLGAKFYGLFDNGCIYGFIKGEPLAYEDISKPTMQTCIAKEIAQWHSIEMPTRKNPSLWPTIKKWAALAPDVYPVPEKNEYYQSINVKKMIEEGKMLEQRLAQLNSPIVFCHNDLLSGNIIYDPSQNCASFIDFEYANYNFRGLELGNHFNEYAGFGPDYSLYPNKESQIHFLTDYHRSLFKTEPTQDELEKLYIESNQFSLASHLYWGFWAIVQAMNSQIDFDYLEYGKARFDRYYETRDQFLNLN.

Belongs to the choline/ethanolamine kinase family.

Its subcellular location is the cytoplasm. The catalysed reaction is ethanolamine + ATP = phosphoethanolamine + ADP + H(+). It functions in the pathway phospholipid metabolism; phosphatidylethanolamine biosynthesis; phosphatidylethanolamine from ethanolamine: step 1/3. Functionally, highly specific for ethanolamine phosphorylation. May be a rate-controlling step in phosphatidylethanolamine biosynthesis. This Dictyostelium discoideum (Social amoeba) protein is Probable ethanolamine kinase A (etnkA).